The sequence spans 57 residues: uncharacterized protein (57 aa).

The N-terminal stretch at 1 to 24 (MYDTWFVLTAVVLFVLVLIGNVHG) is a signal peptide.

Prismatic layer of shell (at protein level).

Its subcellular location is the secreted. This is an uncharacterized protein from Margaritifera margaritifera (Freshwater pearl mussel).